A 158-amino-acid polypeptide reads, in one-letter code: Auxin-responsive protein IAA31 (158 aa).

A compositionally biased stretch (low complexity) spans 1 to 40 (MEVSNSCSSFSSSSVDSTKPSPSESSVNLSLSLTFPSTSP). The segment at 1 to 49 (MEVSNSCSSFSSSSVDSTKPSPSESSVNLSLSLTFPSTSPQREARQDWP) is disordered. Residues 29 to 33 (LSLSL) carry the EAR-like (transcriptional repression) motif. In terms of domain architecture, PB1 spans 72–157 (SLFVKVYMEG…RRLKITRPER (86 aa)).

Belongs to the Aux/IAA family. As to quaternary structure, homodimers and heterodimers.

The protein resides in the nucleus. In terms of biological role, aux/IAA proteins are short-lived transcriptional factors that function as repressors of early auxin response genes at low auxin concentrations. Repression is thought to result from the interaction with auxin response factors (ARFs), proteins that bind to the auxin-responsive promoter element (AuxRE). Formation of heterodimers with ARF proteins may alter their ability to modulate early auxin response genes expression. This Arabidopsis thaliana (Mouse-ear cress) protein is Auxin-responsive protein IAA31 (IAA31).